The sequence spans 361 residues: Ribosomal RNA large subunit methyltransferase M (361 aa).

Residues Ser187, 220–223 (CPGG), Asp239, Asp259, and Asp276 each bind S-adenosyl-L-methionine. Lys305 acts as the Proton acceptor in catalysis.

This sequence belongs to the class I-like SAM-binding methyltransferase superfamily. RNA methyltransferase RlmE family. RlmM subfamily. In terms of assembly, monomer.

The protein localises to the cytoplasm. It catalyses the reaction cytidine(2498) in 23S rRNA + S-adenosyl-L-methionine = 2'-O-methylcytidine(2498) in 23S rRNA + S-adenosyl-L-homocysteine + H(+). Functionally, catalyzes the 2'-O-methylation at nucleotide C2498 in 23S rRNA. This is Ribosomal RNA large subunit methyltransferase M from Shewanella sp. (strain ANA-3).